A 467-amino-acid chain; its full sequence is Asparagine--tRNA ligase (467 aa).

Belongs to the class-II aminoacyl-tRNA synthetase family. Homodimer.

The protein resides in the cytoplasm. The catalysed reaction is tRNA(Asn) + L-asparagine + ATP = L-asparaginyl-tRNA(Asn) + AMP + diphosphate + H(+). In Haemophilus ducreyi (strain 35000HP / ATCC 700724), this protein is Asparagine--tRNA ligase.